Consider the following 306-residue polypeptide: Ribonuclease Z (306 aa).

His63, His65, Asp67, His68, His141, Asp211, and His269 together coordinate Zn(2+). Asp67 (proton acceptor) is an active-site residue.

It belongs to the RNase Z family. In terms of assembly, homodimer. It depends on Zn(2+) as a cofactor.

It carries out the reaction Endonucleolytic cleavage of RNA, removing extra 3' nucleotides from tRNA precursor, generating 3' termini of tRNAs. A 3'-hydroxy group is left at the tRNA terminus and a 5'-phosphoryl group is left at the trailer molecule.. Zinc phosphodiesterase, which displays some tRNA 3'-processing endonuclease activity. Probably involved in tRNA maturation, by removing a 3'-trailer from precursor tRNA. This chain is Ribonuclease Z, found in Staphylococcus haemolyticus (strain JCSC1435).